Here is a 75-residue protein sequence, read N- to C-terminus: Acyl carrier protein (75 aa).

The region spanning 1–75 (MSVFDKVKSI…DAVNYIKENQ (75 aa)) is the Carrier domain. An O-(pantetheine 4'-phosphoryl)serine modification is found at Ser35.

Belongs to the acyl carrier protein (ACP) family. Post-translationally, 4'-phosphopantetheine is transferred from CoA to a specific serine of apo-ACP by AcpS. This modification is essential for activity because fatty acids are bound in thioester linkage to the sulfhydryl of the prosthetic group.

The protein resides in the cytoplasm. Its pathway is lipid metabolism; fatty acid biosynthesis. Functionally, carrier of the growing fatty acid chain in fatty acid biosynthesis. This Desulfitobacterium hafniense (strain Y51) protein is Acyl carrier protein.